Reading from the N-terminus, the 878-residue chain is Ecdysone receptor (878 aa).

2 disordered regions span residues 1-27 (MKRRWSNNGGFMRLPEESSSEVTSSSN) and 209-254 (GLGM…SKKG). The interval 1-263 (MKRRWSNNGG…GPAPRVQEEL (263 aa)) is modulating. 2 NR C4-type zinc fingers span residues 264-284 (CLVCGDRASGYHYNALTCEGC) and 300-324 (CKFGRACEMDMYMRRKCQECRLKKC). The nuclear receptor DNA-binding region spans 264–336 (CLVCGDRASG…VGMRPECVVP (73 aa)). The disordered stretch occupies residues 344 to 374 (RREKKAQKEKDKMTTSPSSQHGGNGSLASGG). The segment covering 365-374 (GGNGSLASGG) has biased composition (gly residues). An NR LBD domain is found at 419–654 (NQLAVIYKLI…FLEEIWDVHA (236 aa)). 2 stretches are compositionally biased toward low complexity: residues 698 to 709 (TSAAAAAAQHQP) and 728 to 759 (QTQPQLQPQLPPQLQGQLQPQLQPQLQTQLQP). Residues 698–759 (TSAAAAAAQH…QPQLQTQLQP (62 aa)) are disordered.

It belongs to the nuclear hormone receptor family. NR1 subfamily. As to quaternary structure, heterodimer of USP and ECR. Only the heterodimer is capable of high-affinity binding to ecdysone. Interacts with trr in an ecdysone-dependent manner. Upon ecdysone stimulation, interacts with Nup98. As to expression, isoform B1 predominates over isoform A in larval tissues, imaginal histoblast nests and midgut islands. Isoform A predominates over B1 in imaginal disks, and the larval prothoracic gland.

The protein localises to the nucleus. Functionally, receptor for ecdysone. Binds to ecdysone response elements (ECRES) following ecdysone-binding, and recruitment of a complex containing the histone methyltransferase trr, leads to activate transcription of target genes. This chain is Ecdysone receptor (EcR), found in Drosophila melanogaster (Fruit fly).